Consider the following 912-residue polypeptide: Protein translocase subunit SecA (912 aa).

ATP contacts are provided by residues Gln-87, 105–109 (GEGKT), and Asp-508. A disordered region spans residues 864–912 (AEEEVEQMQGGNAPVPVSQVTRDEPKVGRNDPCPCGSGKKYKHCHGQLS). Positions 896, 898, 907, and 908 each coordinate Zn(2+). A compositionally biased stretch (basic residues) spans 902–912 (KKYKHCHGQLS).

The protein belongs to the SecA family. As to quaternary structure, monomer and homodimer. Part of the essential Sec protein translocation apparatus which comprises SecA, SecYEG and auxiliary proteins SecDF-YajC and YidC. Zn(2+) serves as cofactor.

Its subcellular location is the cell inner membrane. The protein resides in the cytoplasm. The catalysed reaction is ATP + H2O + cellular proteinSide 1 = ADP + phosphate + cellular proteinSide 2.. In terms of biological role, part of the Sec protein translocase complex. Interacts with the SecYEG preprotein conducting channel. Has a central role in coupling the hydrolysis of ATP to the transfer of proteins into and across the cell membrane, serving both as a receptor for the preprotein-SecB complex and as an ATP-driven molecular motor driving the stepwise translocation of polypeptide chains across the membrane. In Xanthomonas euvesicatoria pv. vesicatoria (strain 85-10) (Xanthomonas campestris pv. vesicatoria), this protein is Protein translocase subunit SecA.